A 361-amino-acid chain; its full sequence is 3-dehydroquinate synthase (361 aa).

Residues 72 to 77 (SGEKEK), 130 to 131 (TT), lysine 142, and lysine 151 contribute to the NAD(+) site. Residues glutamate 184, histidine 247, and histidine 264 each coordinate Zn(2+).

It belongs to the sugar phosphate cyclases superfamily. Dehydroquinate synthase family. Co(2+) serves as cofactor. It depends on Zn(2+) as a cofactor. NAD(+) is required as a cofactor.

The protein resides in the cytoplasm. It carries out the reaction 7-phospho-2-dehydro-3-deoxy-D-arabino-heptonate = 3-dehydroquinate + phosphate. It participates in metabolic intermediate biosynthesis; chorismate biosynthesis; chorismate from D-erythrose 4-phosphate and phosphoenolpyruvate: step 2/7. Catalyzes the conversion of 3-deoxy-D-arabino-heptulosonate 7-phosphate (DAHP) to dehydroquinate (DHQ). In Bacillus cereus (strain G9842), this protein is 3-dehydroquinate synthase.